The following is a 330-amino-acid chain: MATH domain and coiled-coil domain-containing protein At3g58210 (330 aa).

An MATH domain is found at aspartate 6–valine 133. Residues phenylalanine 263–lysine 314 are a coiled coil.

The chain is MATH domain and coiled-coil domain-containing protein At3g58210 from Arabidopsis thaliana (Mouse-ear cress).